A 1090-amino-acid polypeptide reads, in one-letter code: Exocyst complex component SEC5B (1090 aa).

A compositionally biased stretch (acidic residues) spans 1-12 (MSSSDDLDEDEL). The interval 1–126 (MSSSDDLDED…ARKEDDRAWD (126 aa)) is disordered. Positions 23–46 (RDVTYQKPPSANSRKPVTNLVQQP) are enriched in polar residues. Residues 52–62 (AAAPPSKGGAK) are compositionally biased toward low complexity. Residues 96-109 (GGGGDGGGGRGRGG) are compositionally biased toward gly residues. Residues 110–126 (SGKERGRARKEDDRAWD) show a composition bias toward basic and acidic residues. S179 bears the Phosphoserine mark. Positions 486-502 (VQLSDDTSSMEDNQVQV) are enriched in polar residues. Disordered regions lie at residues 486-511 (VQLSDDTSSMEDNQVQVDQPLEESAR), 984-1013 (ETVENNPGGHQRKPTRGSEDAISDDKQSSV), and 1055-1090 (PVAKAAYSRTSTDSPSRNYRESQPMGSPVQARPRRR). A compositionally biased stretch (basic and acidic residues) spans 999–1010 (RGSEDAISDDKQ). Positions 1062–1071 (SRTSTDSPSR) are enriched in polar residues.

The protein belongs to the SEC5 family. In terms of assembly, the exocyst complex is composed of SEC3, SEC5, SEC6, SEC8, SEC10, EXO70A1 and EXO84B.

Functionally, component of the exocyst complex involved in the docking of exocytic vesicles with fusion sites on the plasma membrane during regulated or polarized secretion. Involved in polarized cell growth and organ morphogenesis. During cytokinesis, involved in cell plate initiation, cell plate maturation and formation of new primary cell wall. The protein is Exocyst complex component SEC5B (SEC5B) of Arabidopsis thaliana (Mouse-ear cress).